The chain runs to 471 residues: Dynein regulatory complex subunit 4 (471 aa).

A disordered region spans residues 1–24 (MAPKKKGTKKESKKDAVATGDIEG). Coiled-coil stretches lie at residues 23 to 239 (EGAS…YNDI) and 282 to 425 (LSRA…DVAK).

This sequence belongs to the DRC4 family. Component of the nexin-dynein regulatory complex (N-DRC). Interacts with DRC1, DRC2 and DRC5.

It is found in the cytoplasm. It localises to the cytoskeleton. Its subcellular location is the flagellum axoneme. The protein resides in the flagellum basal body. Functionally, component of the nexin-dynein regulatory complex (N-DRC), a key regulator of ciliary/flagellar motility which maintains the alignment and integrity of the distal axoneme and regulates microtubule sliding in motile axonemes. Plays an important role in the assembly of the N-DRC linker. The protein is Dynein regulatory complex subunit 4 of Chlamydomonas reinhardtii (Chlamydomonas smithii).